We begin with the raw amino-acid sequence, 239 residues long: Purine nucleoside phosphorylase DeoD-type (239 aa).

Histidine 5 provides a ligand contact to a purine D-ribonucleoside. Residues glycine 21, arginine 25, arginine 44, and 88–91 (RVGS) contribute to the phosphate site. A purine D-ribonucleoside-binding positions include 180 to 182 (EME) and 204 to 205 (SD). Residue aspartate 205 is the Proton donor of the active site.

Belongs to the PNP/UDP phosphorylase family. Homohexamer; trimer of homodimers.

The catalysed reaction is a purine D-ribonucleoside + phosphate = a purine nucleobase + alpha-D-ribose 1-phosphate. It catalyses the reaction a purine 2'-deoxy-D-ribonucleoside + phosphate = a purine nucleobase + 2-deoxy-alpha-D-ribose 1-phosphate. Catalyzes the reversible phosphorolytic breakdown of the N-glycosidic bond in the beta-(deoxy)ribonucleoside molecules, with the formation of the corresponding free purine bases and pentose-1-phosphate. The chain is Purine nucleoside phosphorylase DeoD-type from Salmonella arizonae (strain ATCC BAA-731 / CDC346-86 / RSK2980).